A 472-amino-acid polypeptide reads, in one-letter code: F420-non-reducing hydrogenase subunit A (472 aa).

Positions 61, 64, 442, and 445 each coordinate Ni(2+).

It belongs to the [NiFe]/[NiFeSe] hydrogenase large subunit family. As to quaternary structure, the F420-non-reducing hydrogenase is composed of three subunits; MvhA, MvhD and MvhG. It forms a complex with the heterodisulfide reductase (hdr). Requires Ni(2+) as cofactor.

Its function is as follows. Part of a complex that provides reducing equivalents for heterodisulfide reductase. In Methanothermobacter marburgensis (strain ATCC BAA-927 / DSM 2133 / JCM 14651 / NBRC 100331 / OCM 82 / Marburg) (Methanobacterium thermoautotrophicum), this protein is F420-non-reducing hydrogenase subunit A (mvhA).